The primary structure comprises 410 residues: Cysteine desulfurase IscS (410 aa).

Pyridoxal 5'-phosphate-binding positions include 80–81, Asn160, Gln188, and 208–210; these read AT and SGH. Lys211 carries the N6-(pyridoxal phosphate)lysine modification. Thr248 contributes to the pyridoxal 5'-phosphate binding site. The active-site Cysteine persulfide intermediate is Cys334. Cys334 is a binding site for [2Fe-2S] cluster.

This sequence belongs to the class-V pyridoxal-phosphate-dependent aminotransferase family. NifS/IscS subfamily. As to quaternary structure, homodimer. Forms a heterotetramer with IscU, interacts with other sulfur acceptors. Pyridoxal 5'-phosphate serves as cofactor.

Its subcellular location is the cytoplasm. The catalysed reaction is (sulfur carrier)-H + L-cysteine = (sulfur carrier)-SH + L-alanine. The protein operates within cofactor biosynthesis; iron-sulfur cluster biosynthesis. Its function is as follows. Master enzyme that delivers sulfur to a number of partners involved in Fe-S cluster assembly, tRNA modification or cofactor biosynthesis. Catalyzes the removal of elemental sulfur atoms from cysteine to produce alanine. Functions as a sulfur delivery protein for Fe-S cluster synthesis onto IscU, an Fe-S scaffold assembly protein, as well as other S acceptor proteins. The polypeptide is Cysteine desulfurase IscS (Rickettsia massiliae (strain Mtu5)).